A 1083-amino-acid chain; its full sequence is Kinesin-like protein klp-19 (1083 aa).

The Kinesin motor domain occupies 6–328 (SLRVVVRARP…LRYADRAKQI (323 aa)). An ATP-binding site is contributed by 85–92 (GQTGSGKT). Residues 408–435 (MSALTQKNSRLEEDKAKLQSMLTDVRNT) adopt a coiled-coil conformation. Over residues 458-471 (TEESTTLADDDNDE) the composition is skewed to acidic residues. The segment at 458–479 (TEESTTLADDDNDETALGGQDD) is disordered. The stretch at 487-650 (LPELQAELDD…KSKLQKREND (164 aa)) forms a coiled coil. Polar residues predominate over residues 1044-1055 (DDSQPSPSNSTF). The tract at residues 1044–1083 (DDSQPSPSNSTFVIGAAPTSEADGVPPIKRKSRRTDLGPL) is disordered.

Belongs to the TRAFAC class myosin-kinesin ATPase superfamily. Kinesin family. Expressed in the gonad.

The protein localises to the nucleus. It is found in the nucleoplasm. Its subcellular location is the cytoplasm. The protein resides in the cytoskeleton. It localises to the spindle. The protein localises to the chromosome. Functionally, required for chromosome movement and orientation on spindle poles in mitosis and meiosis. May play a role in early anterior-posterior chromosome movement in mitotic embryos. This is Kinesin-like protein klp-19 from Caenorhabditis elegans.